We begin with the raw amino-acid sequence, 734 residues long: Photosystem I P700 chlorophyll a apoprotein A2 (734 aa).

8 consecutive transmembrane segments (helical) span residues I46–A69, L135–Q158, L175–I199, M273–Y291, L330–Y353, A369–V395, A417–H439, and F517–V535. Residues C559 and C568 each contribute to the [4Fe-4S] cluster site. Helical transmembrane passes span A575–W596 and L643–I665. Positions 654, 662, and 670 each coordinate chlorophyll a. W671 serves as a coordination point for phylloquinone. A helical transmembrane segment spans residues L707–A727.

This sequence belongs to the PsaA/PsaB family. In terms of assembly, the PsaA/B heterodimer binds the P700 chlorophyll special pair and subsequent electron acceptors. PSI consists of a core antenna complex that captures photons, and an electron transfer chain that converts photonic excitation into a charge separation. The eukaryotic PSI reaction center is composed of at least 11 subunits. P700 is a chlorophyll a/chlorophyll a' dimer, A0 is one or more chlorophyll a, A1 is one or both phylloquinones and FX is a shared 4Fe-4S iron-sulfur center. serves as cofactor.

Its subcellular location is the plastid. The protein resides in the chloroplast thylakoid membrane. It catalyses the reaction reduced [plastocyanin] + hnu + oxidized [2Fe-2S]-[ferredoxin] = oxidized [plastocyanin] + reduced [2Fe-2S]-[ferredoxin]. PsaA and PsaB bind P700, the primary electron donor of photosystem I (PSI), as well as the electron acceptors A0, A1 and FX. PSI is a plastocyanin/cytochrome c6-ferredoxin oxidoreductase, converting photonic excitation into a charge separation, which transfers an electron from the donor P700 chlorophyll pair to the spectroscopically characterized acceptors A0, A1, FX, FA and FB in turn. Oxidized P700 is reduced on the lumenal side of the thylakoid membrane by plastocyanin or cytochrome c6. The sequence is that of Photosystem I P700 chlorophyll a apoprotein A2 from Chlorella vulgaris (Green alga).